Here is a 266-residue protein sequence, read N- to C-terminus: Potassium/proton antiporter CemA (266 aa).

3 consecutive transmembrane segments (helical) span residues 46–66 (VIVSVRCLITLIFVPLFINIL), 151–171 (FLSFLSLSVVFLLLKPQIIIL), and 226–246 (FMSLFVATFPVFLDTVFKYWI).

The protein belongs to the CemA family.

Its subcellular location is the plastid. The protein resides in the chloroplast inner membrane. The catalysed reaction is K(+)(in) + H(+)(out) = K(+)(out) + H(+)(in). Its function is as follows. Contributes to K(+)/H(+) antiport activity by supporting proton efflux to control proton extrusion and homeostasis in chloroplasts in a light-dependent manner to modulate photosynthesis. Prevents excessive induction of non-photochemical quenching (NPQ) under continuous-light conditions. Indirectly promotes efficient inorganic carbon uptake into chloroplasts. The protein is Potassium/proton antiporter CemA of Chlorella vulgaris (Green alga).